Consider the following 325-residue polypeptide: Probable transcription factor At4g01260 (325 aa).

Positions 1-98 (MAPKQLKKIE…SMGEEDVKKK (98 aa)) are disordered. Low complexity-rich tracts occupy residues 23–32 (ASSGESATSG) and 49–69 (KPVV…ESST). Residues 73–83 (RSFEKTDEMSK) are compositionally biased toward basic and acidic residues.

This sequence belongs to the GeBP family.

This is Probable transcription factor At4g01260 from Arabidopsis thaliana (Mouse-ear cress).